The chain runs to 671 residues: UvrABC system protein B (671 aa).

The region spanning 31-414 (DGFEQGEKAQ…ELNQTDHKVE (384 aa)) is the Helicase ATP-binding domain. 44–51 (GATGTGKT) contacts ATP. Residues 97–120 (YYDYYQPEAYVPQSDTYIEKDSSI) carry the Beta-hairpin motif. Positions 435 to 601 (QIDDLVGEVN…TIVKPIRDVI (167 aa)) constitute a Helicase C-terminal domain. Positions 630-665 (QNMIKTLTAQMQEAAKKLDFEEAANLRDAIMDLKKQ) constitute a UVR domain.

This sequence belongs to the UvrB family. As to quaternary structure, forms a heterotetramer with UvrA during the search for lesions. Interacts with UvrC in an incision complex.

Its subcellular location is the cytoplasm. In terms of biological role, the UvrABC repair system catalyzes the recognition and processing of DNA lesions. A damage recognition complex composed of 2 UvrA and 2 UvrB subunits scans DNA for abnormalities. Upon binding of the UvrA(2)B(2) complex to a putative damaged site, the DNA wraps around one UvrB monomer. DNA wrap is dependent on ATP binding by UvrB and probably causes local melting of the DNA helix, facilitating insertion of UvrB beta-hairpin between the DNA strands. Then UvrB probes one DNA strand for the presence of a lesion. If a lesion is found the UvrA subunits dissociate and the UvrB-DNA preincision complex is formed. This complex is subsequently bound by UvrC and the second UvrB is released. If no lesion is found, the DNA wraps around the other UvrB subunit that will check the other stand for damage. The polypeptide is UvrABC system protein B (Lactobacillus johnsonii (strain CNCM I-12250 / La1 / NCC 533)).